The chain runs to 418 residues: Bile acid-CoA:amino acid N-acyltransferase (418 aa).

S125 bears the Phosphoserine mark. Residues C235, D328, and H362 each act as charge relay system in the active site. S416 bears the Phosphoserine mark.

Belongs to the C/M/P thioester hydrolase family. In terms of assembly, monomer. In terms of tissue distribution, expressed in the gallbladder mucosa and pancreas. Expressed in hepatocytes (at protein level).

Its subcellular location is the cytoplasm. The protein localises to the cytosol. It localises to the peroxisome. The catalysed reaction is choloyl-CoA + glycine = glycocholate + CoA + H(+). The enzyme catalyses hexadecanoyl-CoA + H2O = hexadecanoate + CoA + H(+). It catalyses the reaction choloyl-CoA + H2O = cholate + CoA + H(+). It carries out the reaction chenodeoxycholoyl-CoA + H2O = chenodeoxycholate + CoA + H(+). The catalysed reaction is eicosanoyl-CoA + H2O = eicosanoate + CoA + H(+). The enzyme catalyses octadecanoyl-CoA + H2O = octadecanoate + CoA + H(+). It catalyses the reaction docosanoyl-CoA + H2O = docosanoate + CoA + H(+). It carries out the reaction tetracosanoyl-CoA + H2O = tetracosanoate + CoA + H(+). The catalysed reaction is hexacosanoyl-CoA + H2O = hexacosanoate + CoA + H(+). The enzyme catalyses dodecanoyl-CoA + H2O = dodecanoate + CoA + H(+). It catalyses the reaction tetradecanoyl-CoA + H2O = tetradecanoate + CoA + H(+). It carries out the reaction choloyl-CoA + taurine = taurocholate + CoA + H(+). The catalysed reaction is chenodeoxycholoyl-CoA + glycine = glycochenodeoxycholate + CoA + H(+). The enzyme catalyses chenodeoxycholoyl-CoA + taurine = taurochenodeoxycholate + CoA + H(+). It catalyses the reaction eicosanoyl-CoA + glycine = N-eicosanoylglycinate + CoA + H(+). It carries out the reaction hexacosanoyl-CoA + glycine = N-hexacosanoylglycine + CoA + H(+). The catalysed reaction is docosanoyl-CoA + glycine = N-docosanoylglycine + CoA + H(+). In terms of biological role, catalyzes the amidation of bile acids (BAs) with the amino acids taurine and glycine. More than 95% of the BAs are N-acyl amidates with glycine and taurine. Amidation of BAs in the liver with glycine or taurine prior to their excretion into bile is an important biochemical event in bile acid metabolism. This conjugation (or amidation) plays several important biological roles in that it promotes the secretion of BAs and cholesterol into bile and increases the detergent properties of BAs in the intestine, which facilitates lipid and vitamin absorption. May also act as an acyl-CoA thioesterase that regulates intracellular levels of free fatty acids. In vitro, catalyzes the hydrolysis of long- and very long-chain saturated acyl-CoAs to the free fatty acid and coenzyme A (CoASH), and conjugates glycine to these acyl-CoAs. This Homo sapiens (Human) protein is Bile acid-CoA:amino acid N-acyltransferase (BAAT).